We begin with the raw amino-acid sequence, 1020 residues long: Protein CLASP-2 (1020 aa).

The span at 259-271 (ASDAASSSTSINS) shows a compositional bias: low complexity. 3 disordered regions span residues 259–280 (ASDAASSSTSINSERGTAPFRS), 329–387 (PMTT…RPSA), and 419–461 (LQKA…ALDT). The segment covering 329–343 (PMTTRTLSKIDTSPG) has biased composition (polar residues). The segment covering 372-381 (SQPGSRNGSP) has biased composition (low complexity). Polar residues predominate over residues 450–460 (QKATPQKSALD). The HEAT repeat unit spans residues 954-992 (LAPCVIKSYDSPSSAVRKTAVYCLVAMVNKLGMKTMEPH).

The protein belongs to the CLASP family. Interacts with hcp-1 and hcp-2.

Its subcellular location is the cytoplasm. The protein localises to the cytoskeleton. It is found in the microtubule organizing center. The protein resides in the centrosome. It localises to the chromosome. Its subcellular location is the centromere. The protein localises to the kinetochore. It is found in the spindle. Its function is as follows. Probable microtubule plus-end tracking protein that promotes the stabilization of dynamic microtubules. Required for the formation of mitotic and meiotic spindles. Specifically promotes the polymerization of kinetochore-bound microtubules. Also required for cytoplasmic streaming. Essential for embryonic development. The chain is Protein CLASP-2 (cls-2) from Caenorhabditis elegans.